The following is a 243-amino-acid chain: NAD(P)H-quinone oxidoreductase subunit K (243 aa).

[4Fe-4S] cluster-binding residues include Cys59, Cys60, Cys124, and Cys155.

The protein belongs to the complex I 20 kDa subunit family. NDH-1 can be composed of about 15 different subunits; different subcomplexes with different compositions have been identified which probably have different functions. [4Fe-4S] cluster is required as a cofactor.

The protein resides in the cellular thylakoid membrane. It catalyses the reaction a plastoquinone + NADH + (n+1) H(+)(in) = a plastoquinol + NAD(+) + n H(+)(out). It carries out the reaction a plastoquinone + NADPH + (n+1) H(+)(in) = a plastoquinol + NADP(+) + n H(+)(out). NDH-1 shuttles electrons from an unknown electron donor, via FMN and iron-sulfur (Fe-S) centers, to quinones in the respiratory and/or the photosynthetic chain. The immediate electron acceptor for the enzyme in this species is believed to be plastoquinone. Couples the redox reaction to proton translocation, and thus conserves the redox energy in a proton gradient. Cyanobacterial NDH-1 also plays a role in inorganic carbon-concentration. This is NAD(P)H-quinone oxidoreductase subunit K from Picosynechococcus sp. (strain ATCC 27264 / PCC 7002 / PR-6) (Agmenellum quadruplicatum).